A 310-amino-acid chain; its full sequence is 26S proteasome non-ATPase regulatory subunit 14 (310 aa).

An MPN domain is found at 31 to 166 (VYISSLALLK…IDAFRLINAN (136 aa)). Zn(2+) is bound by residues H113, H115, and D126. The JAMM motif motif lies at 113–126 (HSHPGFGCWLSGVD). Phosphoserine is present on residues S150 and S224. Residue T266 is modified to Phosphothreonine.

Belongs to the peptidase M67A family. PSMD14 subfamily. As to quaternary structure, component of the 19S proteasome regulatory particle complex. The 26S proteasome consists of a 20S core particle (CP) and two 19S regulatory subunits (RP). The regulatory particle is made of a lid composed of 9 subunits including PSMD4, a base containing 6 ATPases and few additional components. Within the complex, PSMD4 interacts with subunit PSMD7 through their respective MPN domain. Interacts with TXNL1. Widely expressed. Highest levels in heart and skeletal muscle.

Component of the 26S proteasome, a multiprotein complex involved in the ATP-dependent degradation of ubiquitinated proteins. This complex plays a key role in the maintenance of protein homeostasis by removing misfolded or damaged proteins, which could impair cellular functions, and by removing proteins whose functions are no longer required. Therefore, the proteasome participates in numerous cellular processes, including cell cycle progression, apoptosis, or DNA damage repair. The PSMD14 subunit is a metalloprotease that specifically cleaves 'Lys-63'-linked polyubiquitin chains within the complex. Plays a role in response to double-strand breaks (DSBs): acts as a regulator of non-homologous end joining (NHEJ) by cleaving 'Lys-63'-linked polyubiquitin, thereby promoting retention of JMJD2A/KDM4A on chromatin and restricting TP53BP1 accumulation. Also involved in homologous recombination repair by promoting RAD51 loading. In Homo sapiens (Human), this protein is 26S proteasome non-ATPase regulatory subunit 14 (PSMD14).